The primary structure comprises 657 residues: Glycogen debranching enzyme (657 aa).

Asp-336 serves as the catalytic Nucleophile. Glu-371 functions as the Proton donor in the catalytic mechanism. The segment at 460–479 (ANGEENRDGTNNNYSNNHGK) is disordered.

This sequence belongs to the glycosyl hydrolase 13 family.

It carries out the reaction Hydrolysis of (1-&gt;6)-alpha-D-glucosidic linkages to branches with degrees of polymerization of three or four glucose residues in limit dextrin.. The protein operates within glycan degradation; glycogen degradation. In terms of biological role, removes maltotriose and maltotetraose chains that are attached by 1,6-alpha-linkage to the limit dextrin main chain, generating a debranched limit dextrin. This chain is Glycogen debranching enzyme, found in Escherichia coli O1:K1 / APEC.